A 275-amino-acid chain; its full sequence is MPELPEVETVMRGLAAKLEGRRLARVVLARPDLRWPIPEGFVQFLSGARVEGFRRRGKYMFMRLDRALSVLIHLGMSGRMTIDSAPLPHQHLTLETDDGAVIGFVDPRRFGALDLVATAAEDSHRLIAGLGPEPLDDAFSPATLASALEGKKTPIKAALLDQSVVAGLGNIYVSEALFRAGILPHRLAGTIGRGRAGRLVPAIKATLTDAIAAGGSSLRDYVQPSGELGYFQHAWKVYDRAGQPCERCPGPAACAGISRTVQSGRATYFCARTQK.

P2 functions as the Schiff-base intermediate with DNA in the catalytic mechanism. E3 functions as the Proton donor in the catalytic mechanism. K58 acts as the Proton donor; for beta-elimination activity in catalysis. 3 residues coordinate DNA: H89, R108, and K151. An FPG-type; degenerate zinc finger spans residues 236–275; it reads KVYDRAGQPCERCPGPAACAGISRTVQSGRATYFCARTQK. R265 serves as the catalytic Proton donor; for delta-elimination activity.

This sequence belongs to the FPG family. In terms of assembly, monomer. Zn(2+) is required as a cofactor.

It catalyses the reaction Hydrolysis of DNA containing ring-opened 7-methylguanine residues, releasing 2,6-diamino-4-hydroxy-5-(N-methyl)formamidopyrimidine.. The catalysed reaction is 2'-deoxyribonucleotide-(2'-deoxyribose 5'-phosphate)-2'-deoxyribonucleotide-DNA = a 3'-end 2'-deoxyribonucleotide-(2,3-dehydro-2,3-deoxyribose 5'-phosphate)-DNA + a 5'-end 5'-phospho-2'-deoxyribonucleoside-DNA + H(+). Its function is as follows. Involved in base excision repair of DNA damaged by oxidation or by mutagenic agents. Acts as a DNA glycosylase that recognizes and removes damaged bases. Has a preference for oxidized purines, such as 7,8-dihydro-8-oxoguanine (8-oxoG). Has AP (apurinic/apyrimidinic) lyase activity and introduces nicks in the DNA strand. Cleaves the DNA backbone by beta-delta elimination to generate a single-strand break at the site of the removed base with both 3'- and 5'-phosphates. The sequence is that of Formamidopyrimidine-DNA glycosylase from Acidiphilium cryptum (strain JF-5).